We begin with the raw amino-acid sequence, 307 residues long: 2-phospho-L-lactate transferase (307 aa).

Residues Asp-48 and Lys-87 each contribute to the 7,8-didemethyl-8-hydroxy-5-deazariboflavin site.

It belongs to the CofD family. As to quaternary structure, homodimer. Mg(2+) serves as cofactor.

It carries out the reaction (2S)-lactyl-2-diphospho-5'-guanosine + 7,8-didemethyl-8-hydroxy-5-deazariboflavin = oxidized coenzyme F420-0 + GMP + H(+). The protein operates within cofactor biosynthesis; coenzyme F420 biosynthesis. In terms of biological role, catalyzes the transfer of the 2-phospholactate moiety from (2S)-lactyl-2-diphospho-5'-guanosine to 7,8-didemethyl-8-hydroxy-5-deazariboflavin (FO) with the formation of oxidized coenzyme F420-0 and GMP. The sequence is that of 2-phospho-L-lactate transferase from Methanosarcina acetivorans (strain ATCC 35395 / DSM 2834 / JCM 12185 / C2A).